Here is an 817-residue protein sequence, read N- to C-terminus: Rho GTPase-activating protein gacII (817 aa).

One can recognise a Rho-GAP domain in the interval 20 to 204; sequence TTIVKIGTPK…TLIEEFQYIS (185 aa). Positions 238-298 constitute an SH3 domain; that stretch reads EDYLIAKANT…SQTYVDIIDI (61 aa). Residues 318-339 show a composition bias toward low complexity; that stretch reads ASTILHTPPTSSSSSSSSSSSS. 3 disordered regions span residues 318 to 638, 691 to 771, and 783 to 817; these read ASTI…NIPV, LGGQ…QQQQ, and LPPQ…FNKN. A compositionally biased stretch (polar residues) spans 340–358; that stretch reads ILLTDNQPKLCSSTPRINN. The segment covering 359–391 has biased composition (low complexity); sequence SPSSFSPSLSSTTPQLLVQQSPRQSPRQIPSIS. The segment covering 396-438 has biased composition (polar residues); the sequence is PNNTNQPSFGHGTLQRTSTGYFSSKPLSISQPINMSKPTNMSP. The span at 461–471 shows a compositional bias: pro residues; that stretch reads PPLPTKPPPLT. The segment covering 472–498 has biased composition (low complexity); that stretch reads IPSSSSLPTTPIKQQPQQPIQQPLTPQ. A compositionally biased stretch (polar residues) spans 509-532; it reads LSSSVNTANTGNCANILSPNSDRY. Low complexity-rich tracts occupy residues 534 to 568, 577 to 587, and 607 to 624; these read SSRS…SSTS, KSKSSKNSPSK, and ITTT…TIAT. Pro residues predominate over residues 625–635; sequence TPPPPSKPLPN. The span at 705-722 shows a compositional bias: polar residues; the sequence is KSQSSYLDNNNLPSRNTN. Over residues 725-734 the composition is skewed to pro residues; it reads NLPPRPPPLN. Composition is skewed to low complexity over residues 735–744 and 752–771; these read IPQQQQQYKP and QSPQ…QQQQ. The span at 785 to 803 shows a compositional bias: polar residues; that stretch reads PQNTNLSGKNLQRSSTSML. The span at 807-817 shows a compositional bias: pro residues; the sequence is LPPPPFSFNKN.

Its subcellular location is the cytoplasm. Rho GTPase-activating protein involved in the signal transduction pathway. This is Rho GTPase-activating protein gacII (gacII) from Dictyostelium discoideum (Social amoeba).